Consider the following 392-residue polypeptide: Formate-dependent phosphoribosylglycinamide formyltransferase (392 aa).

Residues 22–23 (EL) and Glu-82 contribute to the N(1)-(5-phospho-beta-D-ribosyl)glycinamide site. ATP is bound by residues Arg-114, Lys-155, 160-165 (SSGKGQ), 195-198 (EGVV), and Glu-203. The 190-residue stretch at 119–308 (RLAAEELGLP…EFALHVRAFL (190 aa)) folds into the ATP-grasp domain. Positions 267 and 279 each coordinate Mg(2+). N(1)-(5-phospho-beta-D-ribosyl)glycinamide-binding positions include Asp-286, Lys-355, and 362-363 (RR).

This sequence belongs to the PurK/PurT family. Homodimer.

It carries out the reaction N(1)-(5-phospho-beta-D-ribosyl)glycinamide + formate + ATP = N(2)-formyl-N(1)-(5-phospho-beta-D-ribosyl)glycinamide + ADP + phosphate + H(+). It functions in the pathway purine metabolism; IMP biosynthesis via de novo pathway; N(2)-formyl-N(1)-(5-phospho-D-ribosyl)glycinamide from N(1)-(5-phospho-D-ribosyl)glycinamide (formate route): step 1/1. Functionally, involved in the de novo purine biosynthesis. Catalyzes the transfer of formate to 5-phospho-ribosyl-glycinamide (GAR), producing 5-phospho-ribosyl-N-formylglycinamide (FGAR). Formate is provided by PurU via hydrolysis of 10-formyl-tetrahydrofolate. The sequence is that of Formate-dependent phosphoribosylglycinamide formyltransferase from Salmonella choleraesuis (strain SC-B67).